The chain runs to 334 residues: Desumoylating isopeptidase 1 homolog (334 aa).

The 145-residue stretch at 30 to 174 (TVVRLNVYDM…FLEKCIPQEW (145 aa)) folds into the PPPDE domain. Catalysis depends on residues His-55 and Cys-133. The segment covering 310–325 (SNIGKTNSTPGTTSNG) has biased composition (polar residues). The interval 310 to 334 (SNIGKTNSTPGTTSNGLAKPTCSEC) is disordered.

The protein belongs to the DeSI family. In terms of tissue distribution, expressed in the pharynx, hypodermis, intestine, head neuron and tail neuron.

It localises to the cytoplasm. It is found in the nucleus. Protease which deconjugates SUMO from some substrate proteins. Has isopeptidase but not SUMO-processing activity. Collaborates with ubql-1 in the export of ubiquitinated proteins from the nucleus to the cytoplasm. The chain is Desumoylating isopeptidase 1 homolog from Caenorhabditis elegans.